The primary structure comprises 169 residues: Sorting nexin-24 (169 aa).

N-acetylmethionine is present on methionine 1. The 125-residue stretch at 1-125 (MEVYIPSFRY…SFDETESEES (125 aa)) folds into the PX domain. Arginine 38, serine 40, lysine 61, and arginine 74 together coordinate a 1,2-diacyl-sn-glycero-3-phospho-(1D-myo-inositol-3-phosphate). Serine 113 and serine 116 each carry phosphoserine.

It belongs to the sorting nexin family.

It localises to the cytoplasmic vesicle membrane. May be involved in several stages of intracellular trafficking. This chain is Sorting nexin-24 (SNX24), found in Bos taurus (Bovine).